Here is a 226-residue protein sequence, read N- to C-terminus: MLTWLSRTDFDFPPLDKALQEPNGLLAAGGDLNPQRLVAAYRHGCFPWYQDGQPILWWSPDPRTVLFPDELHVSRSLAKCLRQQRFEVTFNRDFRAVIQACAAPRNYADGTWITTPMQLAYQELHLRGIAHSVEVWQERQLVGGLYGLAMGRLFFGESMFSRADNASKVGFVTLVRHLRDAGFVLIDCQMPTRHLHSLGARAISRGEFADYLQRYRDQPPTGDLDF.

The protein belongs to the L/F-transferase family.

The protein localises to the cytoplasm. The enzyme catalyses N-terminal L-lysyl-[protein] + L-leucyl-tRNA(Leu) = N-terminal L-leucyl-L-lysyl-[protein] + tRNA(Leu) + H(+). It carries out the reaction N-terminal L-arginyl-[protein] + L-leucyl-tRNA(Leu) = N-terminal L-leucyl-L-arginyl-[protein] + tRNA(Leu) + H(+). The catalysed reaction is L-phenylalanyl-tRNA(Phe) + an N-terminal L-alpha-aminoacyl-[protein] = an N-terminal L-phenylalanyl-L-alpha-aminoacyl-[protein] + tRNA(Phe). Functions in the N-end rule pathway of protein degradation where it conjugates Leu, Phe and, less efficiently, Met from aminoacyl-tRNAs to the N-termini of proteins containing an N-terminal arginine or lysine. The sequence is that of Leucyl/phenylalanyl-tRNA--protein transferase from Pseudomonas aeruginosa (strain ATCC 15692 / DSM 22644 / CIP 104116 / JCM 14847 / LMG 12228 / 1C / PRS 101 / PAO1).